The following is a 197-amino-acid chain: Putative early 21.8 kDa protein (197 aa).

Its function is as follows. This protein is required for viral late gene expression. This chain is Putative early 21.8 kDa protein (DA26), found in Orgyia pseudotsugata (Douglas-fir tussock moth).